We begin with the raw amino-acid sequence, 395 residues long: S-adenosylmethionine synthase 3 (395 aa).

Glu10 is a binding site for Mg(2+). ATP is bound at residue His16. Glu44 is a K(+) binding site. Residues Glu57 and Gln100 each coordinate L-methionine. ATP contacts are provided by residues 168 to 170 (DGK), 236 to 239 (SGRF), Asp247, 253 to 254 (RK), Ala270, Lys274, and Lys278. L-methionine is bound at residue Asp247. Lys278 serves as a coordination point for L-methionine.

This sequence belongs to the AdoMet synthase family. In terms of assembly, homotetramer. The cofactor is Mn(2+). Mg(2+) is required as a cofactor. It depends on Co(2+) as a cofactor. K(+) serves as cofactor.

It localises to the cytoplasm. The catalysed reaction is L-methionine + ATP + H2O = S-adenosyl-L-methionine + phosphate + diphosphate. It participates in amino-acid biosynthesis; S-adenosyl-L-methionine biosynthesis; S-adenosyl-L-methionine from L-methionine: step 1/1. In terms of biological role, catalyzes the formation of S-adenosylmethionine from methionine and ATP. The reaction comprises two steps that are both catalyzed by the same enzyme: formation of S-adenosylmethionine (AdoMet) and triphosphate, and subsequent hydrolysis of the triphosphate. This Populus trichocarpa (Western balsam poplar) protein is S-adenosylmethionine synthase 3 (METK3).